A 96-amino-acid polypeptide reads, in one-letter code: Small ribosomal subunit protein bS16m (96 aa).

Belongs to the bacterial ribosomal protein bS16 family. In terms of assembly, component of the mitochondrial small ribosomal subunit (mt-SSU). Mature yeast 74S mitochondrial ribosomes consist of a small (37S) and a large (54S) subunit. The 37S small subunit contains a 15S ribosomal RNA (15S mt-rRNA) and at least 32 different proteins. The 54S large subunit contains a 21S rRNA (21S mt-rRNA) and at least 45 different proteins.

The protein resides in the mitochondrion. Functionally, component of the mitochondrial ribosome (mitoribosome), a dedicated translation machinery responsible for the synthesis of mitochondrial genome-encoded proteins, including at least some of the essential transmembrane subunits of the mitochondrial respiratory chain. The mitoribosomes are attached to the mitochondrial inner membrane and translation products are cotranslationally integrated into the membrane. The sequence is that of Small ribosomal subunit protein bS16m (mrps16) from Schizosaccharomyces pombe (strain 972 / ATCC 24843) (Fission yeast).